The sequence spans 717 residues: MDQKLSQLIEELTTSGESQLNAQKMKELKKICKSSEEQLSHAYRLLITQLTQGHAEIRLSAFQIVDELFTRSHQFRMLLVSDFQEFLELTLGTDSDRPLPPPREAAQRLRQAAMQAVEGWNEKFGQAYKKLALGYHFLKHTKKVDFRDINVRTVAERKREEEKQKHLDKIHRESADRAKREMEEMYDEIECCLTEVENCFKLLVPLDFVPCPEDKFFGEASSMTEGYAPCPLSPDLATPRESGLSGPQDEEQPCCSKDLVASAYHVGSVVGLKALPQTAMKDSSRDEDEPSDPDDFLRSHGLGSHKYTLDVEVPSDGLKVQENEDNLAVLHAARDSLKLIQNKFLPTVCSWVQRFTRAGTYSAHLKQAIDLKMELELALKKYEELNIEPGRGQRSRTEALEDSEDEDQDFVEVPEKEGYEPRIPDHLRAEYGLEPKAPLKTLEKGTAVCKLQERTRMRREEEASDPTSAAAQMLRLQDCLSSPSPSSTRVLPGPEEAQKQAERARAPIVPFGVDLCYWGQEQLTAGKILKSDSQHRFWKPSEVEEEVDSAHVSEMLHSRHITFSGTFEPVQHKCRALRPNGRLCERQDRLKCPFHGKIIPRDDKGQPLNPEDRAREQRQQLQRQQAHPDWQDPEFLKDVEAATGVDLGSSRSSKKGKGKKKKHPNLTDLRERTNTARARLEKKVFAKAAVQRVVAAMNQMDQKKHEKFANQFNYALK.

Residues 2-145 (DQKLSQLIEE…HFLKHTKKVD (144 aa)) form a VHS-like region. Residues 169–199 (KIHRESADRAKREMEEMYDEIECCLTEVENC) are a coiled coil. Disordered regions lie at residues 231–253 (PLSP…EEQP), 277–301 (QTAM…RSHG), 389–418 (PGRG…EKEG), and 479–503 (CLSS…QAER). Residues Ser284, Ser291, and Ser403 each carry the phosphoserine modification. 2 stretches are compositionally biased toward acidic residues: residues 285–294 (RDEDEPSDPD) and 400–412 (LEDS…DFVE). Lys416 participates in a covalent cross-link: Glycyl lysine isopeptide (Lys-Gly) (interchain with G-Cter in ubiquitin). The span at 479–489 (CLSSPSPSSTR) shows a compositional bias: polar residues. The segment at 571–598 (QHKCRALRPNGRLCERQDRLKCPFHGKI) adopts a UVSSA-type zinc-finger fold. Zn(2+)-binding residues include Cys574, Cys584, Cys592, and His595. The interval 595-672 (HGKIIPRDDK…HPNLTDLRER (78 aa)) is disordered. The span at 599–618 (IPRDDKGQPLNPEDRAREQR) shows a compositional bias: basic and acidic residues. A compositionally biased stretch (basic residues) spans 652–664 (SSKKGKGKKKKHP).

This sequence belongs to the UVSSA family. Interacts with the elongating form of RNA polymerase II (RNA pol IIo) during transcription stress. Interacts with the TFIIH complex during transcription stress. Interacts with ERCC6. Interacts with ERCC8. Interacts with USP7. Post-translationally, monoubiquitinated at Lys-416 in response to transcription stress; this promotes efficient transfer of TFIIH to stalled RNA polymerase II.

The protein localises to the chromosome. Factor involved in transcription-coupled nucleotide excision repair (TC-NER), a mechanism that rapidly removes RNA polymerase II-blocking lesions from the transcribed strand of active genes. Acts as a key adapter that promotes recruitment of factors involved in TC-NER. Facilitates the ubiquitination of the elongating form of RNA polymerase II (RNA pol IIo) at DNA damage sites, thereby promoting RNA pol IIo backtracking and access by the TC-NER machinery to lesion sites. Also promotes stabilization of ERCC6/CSB by recruiting deubiquitinating enzyme USP7 to TC-NER complexes, preventing UV-induced degradation of ERCC6 by the proteasome. Mediates the recruitment of the TFIIH complex and other factors that are required for nucleotide excision repair to RNA polymerase II. Also required to inactivate stalled RNA polymerase II by blocking the access of TCEA1/TFIIS, thereby preventing reactivation of RNA polymerase II. Not involved in processing oxidative damage. This is UV-stimulated scaffold protein A (Uvssa) from Mus musculus (Mouse).